The primary structure comprises 899 residues: Translation initiation factor IF-2 (899 aa).

Disordered stretches follow at residues 94–167 and 259–309; these read TFTK…VVVK and FNQE…HGFE. The segment covering 107–121 has biased composition (basic and acidic residues); sequence AKARQETEERTRPQE. Low complexity predominate over residues 147–164; that stretch reads RAAQQKETAKTTSTTTEV. Residues 399-568 form the tr-type G domain; that stretch reads TRPPVVTIMG…LIQSELMELK (170 aa). Residues 408-415 are G1; that stretch reads GHVDHGKT. 408-415 contributes to the GTP binding site; it reads GHVDHGKT. The G2 stretch occupies residues 433–437; that stretch reads GITQH. The segment at 454 to 457 is G3; the sequence is DTPG. Residues 454–458 and 508–511 contribute to the GTP site; these read DTPGH and NKMD. Residues 508-511 are G4; that stretch reads NKMD. The interval 544 to 546 is G5; that stretch reads SAH.

This sequence belongs to the TRAFAC class translation factor GTPase superfamily. Classic translation factor GTPase family. IF-2 subfamily.

The protein localises to the cytoplasm. Its function is as follows. One of the essential components for the initiation of protein synthesis. Protects formylmethionyl-tRNA from spontaneous hydrolysis and promotes its binding to the 30S ribosomal subunits. Also involved in the hydrolysis of GTP during the formation of the 70S ribosomal complex. In Acinetobacter baylyi (strain ATCC 33305 / BD413 / ADP1), this protein is Translation initiation factor IF-2.